The primary structure comprises 149 residues: Large ribosomal subunit protein bL9 (149 aa).

It belongs to the bacterial ribosomal protein bL9 family.

Binds to the 23S rRNA. This chain is Large ribosomal subunit protein bL9, found in Bacillus pumilus (strain SAFR-032).